A 380-amino-acid chain; its full sequence is Cytochrome b (380 aa).

4 helical membrane-spanning segments follow: residues 34–54 (FGSL…FLAM), 78–99 (WLLR…YFHI), 114–134 (WNIG…GYVL), and 179–199 (FFTF…IHLL). H84 and H98 together coordinate heme b. H197 serves as a coordination point for heme b. An a ubiquinone-binding site is contributed by H202. 4 consecutive transmembrane segments (helical) span residues 227 to 247 (FKDL…STFA), 289 to 309 (LGGV…PITH), 321 to 341 (TAKA…WIGG), and 348 to 368 (FISI…LIIP).

This sequence belongs to the cytochrome b family. The cytochrome bc1 complex contains 3 respiratory subunits (MT-CYB, CYC1 and UQCRFS1), 2 core proteins (UQCRC1 and UQCRC2) and probably 6 low-molecular weight proteins. Heme b is required as a cofactor.

It localises to the mitochondrion inner membrane. In terms of biological role, component of the ubiquinol-cytochrome c reductase complex (complex III or cytochrome b-c1 complex) that is part of the mitochondrial respiratory chain. The b-c1 complex mediates electron transfer from ubiquinol to cytochrome c. Contributes to the generation of a proton gradient across the mitochondrial membrane that is then used for ATP synthesis. The sequence is that of Cytochrome b (mt-cyb) from Glandirana rugosa (Japanese wrinkled frog).